Here is an 873-residue protein sequence, read N- to C-terminus: uncharacterized protein (873 aa).

Disordered regions lie at residues Met-1 to Lys-24, Ser-175 to Ser-251, Pro-375 to Pro-423, Asp-506 to Ser-540, Asp-568 to Tyr-592, Ala-662 to Ile-773, and Ala-822 to Ile-855. Positions Lys-211–Thr-225 are enriched in basic and acidic residues. Over residues Ser-376–Glu-385 the composition is skewed to basic residues. A compositionally biased stretch (basic residues) spans Pro-574–Phe-586. Over residues Ser-665–Ser-686 the composition is skewed to low complexity. Polar residues predominate over residues Gln-698 to Pro-740. Over residues Tyr-743–Glu-755 the composition is skewed to basic and acidic residues. Low complexity predominate over residues Ser-758–Ile-773. Residues Asn-823 to Ile-855 are compositionally biased toward polar residues.

Its subcellular location is the cytoplasm. It is found in the vacuole membrane. This is an uncharacterized protein from Schizosaccharomyces pombe (strain 972 / ATCC 24843) (Fission yeast).